Consider the following 187-residue polypeptide: Large ribosomal subunit protein uL5 (187 aa).

It belongs to the universal ribosomal protein uL5 family. As to quaternary structure, part of the 50S ribosomal subunit; part of the 5S rRNA/L5/L18/L25 subcomplex. Contacts the 5S rRNA and the P site tRNA. Forms a bridge to the 30S subunit in the 70S ribosome.

In terms of biological role, this is one of the proteins that bind and probably mediate the attachment of the 5S RNA into the large ribosomal subunit, where it forms part of the central protuberance. In the 70S ribosome it contacts protein S13 of the 30S subunit (bridge B1b), connecting the 2 subunits; this bridge is implicated in subunit movement. Contacts the P site tRNA; the 5S rRNA and some of its associated proteins might help stabilize positioning of ribosome-bound tRNAs. This Dinoroseobacter shibae (strain DSM 16493 / NCIMB 14021 / DFL 12) protein is Large ribosomal subunit protein uL5.